Consider the following 216-residue polypeptide: TATA-box-binding protein-like 1 (216 aa).

2 consecutive repeat copies span residues 38 to 121 and 126 to 210.

Belongs to the TBP family.

It is found in the nucleus. In terms of biological role, TATA box-binding transcription factor. Members of the TBP family are differentially required to regulate transcription and development during early embryogenesis. This Entamoeba histolytica (strain ATCC 30459 / HM-1:IMSS / ABRM) protein is TATA-box-binding protein-like 1 (trf1).